The primary structure comprises 191 residues: Methylated-DNA--protein-cysteine methyltransferase (191 aa).

2 residues coordinate DNA: Y120 and R134. C151 serves as the catalytic Nucleophile; methyl group acceptor.

Belongs to the MGMT family.

It is found in the nucleus. The catalysed reaction is a 6-O-methyl-2'-deoxyguanosine in DNA + L-cysteinyl-[protein] = S-methyl-L-cysteinyl-[protein] + a 2'-deoxyguanosine in DNA. The enzyme catalyses a 4-O-methyl-thymidine in DNA + L-cysteinyl-[protein] = a thymidine in DNA + S-methyl-L-cysteinyl-[protein]. Its function is as follows. Involved in the cellular defense against the biological effects of O6-methylguanine (O6-MeG) and O4-methylthymine (O4-MeT) in DNA. Repairs the methylated nucleobase in DNA by stoichiometrically transferring the methyl group to a cysteine residue in the enzyme. This is a suicide reaction: the enzyme is irreversibly inactivated. This chain is Methylated-DNA--protein-cysteine methyltransferase (MGT1), found in Debaryomyces hansenii (strain ATCC 36239 / CBS 767 / BCRC 21394 / JCM 1990 / NBRC 0083 / IGC 2968) (Yeast).